Consider the following 337-residue polypeptide: tRNA N6-adenosine threonylcarbamoyltransferase (337 aa).

Residues His-111 and His-115 each contribute to the Fe cation site. Residues 134 to 138, Asp-167, Gly-180, and Asn-272 each bind substrate; that span reads LVSGG. Position 300 (Asp-300) interacts with Fe cation.

Belongs to the KAE1 / TsaD family. Fe(2+) serves as cofactor.

It localises to the cytoplasm. It catalyses the reaction L-threonylcarbamoyladenylate + adenosine(37) in tRNA = N(6)-L-threonylcarbamoyladenosine(37) in tRNA + AMP + H(+). Required for the formation of a threonylcarbamoyl group on adenosine at position 37 (t(6)A37) in tRNAs that read codons beginning with adenine. Is involved in the transfer of the threonylcarbamoyl moiety of threonylcarbamoyl-AMP (TC-AMP) to the N6 group of A37, together with TsaE and TsaB. TsaD likely plays a direct catalytic role in this reaction. This chain is tRNA N6-adenosine threonylcarbamoyltransferase, found in Salmonella agona (strain SL483).